A 549-amino-acid polypeptide reads, in one-letter code: MAKIIKFDQEGRNAFLKGVNTLADAVKVTLGPKGRNVVIEKSFGAPLITKDGVTVAKEIELDDKFENMGAQLVKEVASKTSDVAGDGTTTATVLAQAIYRQGAKLVAAGHNPMEIKRGIDKAVETLVAELKNISKPIKDHKEIAQVGTISANNDKTIGDIIAEAMEKVGKEGVITVEEAKAMETTLETVEGMQFDRGYLSPYFVTDPERMEATLENANILIHDKKISNMKDLLPVLEQTAKSGRPLIIIAEDIEGEALATLVVNKLRGVLNICAVKAPGFGDRRKAMLEDIAVLTGGKVISEEIGFKLENTTMDMLGQAKKITVDKDNTTIIDGAGSEAEIQGRVKMIRAQIEETTSDYDREKLQERLAKLVGGVAVIKVGAATEVEMKEKKARVEDALHATRAAVDEGIVPGGGVAYLRAMSALDSLDLSTEQQFGVNVIKRALEEPIRQIAQNAGVDGSIVVDKVKNGKDAFGYNAADDEYVDMIQAGIIDPTKVSRSALQNASSIAGLMLTTEAMIADKPKEEGSMPAMPGGMGGMGGMGGMGGMM.

ATP-binding positions include 29 to 32, Lys-50, 86 to 90, Gly-414, 477 to 479, and Asp-493; these read TLGP, DGTTT, and NAA.

This sequence belongs to the chaperonin (HSP60) family. In terms of assembly, forms a cylinder of 14 subunits composed of two heptameric rings stacked back-to-back. Interacts with the co-chaperonin GroES.

It is found in the cytoplasm. It catalyses the reaction ATP + H2O + a folded polypeptide = ADP + phosphate + an unfolded polypeptide.. In terms of biological role, together with its co-chaperonin GroES, plays an essential role in assisting protein folding. The GroEL-GroES system forms a nano-cage that allows encapsulation of the non-native substrate proteins and provides a physical environment optimized to promote and accelerate protein folding. This is Chaperonin GroEL from Geotalea uraniireducens (strain Rf4) (Geobacter uraniireducens).